A 1196-amino-acid chain; its full sequence is DNA-directed RNA polymerase I subunit RPA2 (1196 aa).

A C4-type zinc finger spans residues 1097–1124 (CRECGSILTTQSSVPKIGSMVTIRCRRC).

The protein belongs to the RNA polymerase beta chain family. In terms of assembly, component of the RNA polymerase I (Pol I) complex consisting of 14 subunits.

It is found in the nucleus. It localises to the nucleolus. It carries out the reaction RNA(n) + a ribonucleoside 5'-triphosphate = RNA(n+1) + diphosphate. Functionally, DNA-dependent RNA polymerase catalyzes the transcription of DNA into RNA using the four ribonucleoside triphosphates as substrates. Second largest core component of RNA polymerase I which synthesizes ribosomal RNA precursors. Proposed to contribute to the polymerase catalytic activity and forms the polymerase active center together with the largest subunit. Pol I is composed of mobile elements and RPA2 is part of the core element with the central large cleft and probably a clamp element that moves to open and close the cleft. The polypeptide is DNA-directed RNA polymerase I subunit RPA2 (RPA2) (Eremothecium gossypii (strain ATCC 10895 / CBS 109.51 / FGSC 9923 / NRRL Y-1056) (Yeast)).